We begin with the raw amino-acid sequence, 670 residues long: Methionine--tRNA ligase (670 aa).

The 'HIGH' region motif lies at P14–H24. Zn(2+) contacts are provided by C145, C148, C158, and C161. A 'KMSKS' region motif is present at residues K330 to S334. K333 contacts ATP. One can recognise a tRNA-binding domain in the interval D570–K670.

It belongs to the class-I aminoacyl-tRNA synthetase family. MetG type 1 subfamily. Homodimer. The cofactor is Zn(2+).

The protein localises to the cytoplasm. It carries out the reaction tRNA(Met) + L-methionine + ATP = L-methionyl-tRNA(Met) + AMP + diphosphate. Its function is as follows. Is required not only for elongation of protein synthesis but also for the initiation of all mRNA translation through initiator tRNA(fMet) aminoacylation. This Legionella pneumophila (strain Corby) protein is Methionine--tRNA ligase.